The sequence spans 201 residues: Ribosomal RNA small subunit methyltransferase G (201 aa).

S-adenosyl-L-methionine is bound by residues Gly71, Phe76, 120 to 121 (LE), and Arg134.

It belongs to the methyltransferase superfamily. RNA methyltransferase RsmG family.

Its subcellular location is the cytoplasm. It carries out the reaction guanosine(527) in 16S rRNA + S-adenosyl-L-methionine = N(7)-methylguanosine(527) in 16S rRNA + S-adenosyl-L-homocysteine. Functionally, specifically methylates the N7 position of guanine in position 527 of 16S rRNA. The chain is Ribosomal RNA small subunit methyltransferase G from Rhodospirillum rubrum (strain ATCC 11170 / ATH 1.1.1 / DSM 467 / LMG 4362 / NCIMB 8255 / S1).